The following is a 336-amino-acid chain: Polyadenylate-binding protein-interacting protein 12 (336 aa).

Residues 14-47 (EAGGLISPSPPSSVTSQESGASSNNDHGGNGIHD) are disordered. A compositionally biased stretch (polar residues) spans 25–40 (SSVTSQESGASSNNDH). Positions 75–85 (KLNPMAKEFIP) match the PAM2-like motif. Residues 122–134 (RRKKSFGQQGKRR) carry the Bipartite nuclear localization signal motif. RRM domains are found at residues 150–225 (RTVY…PSKT) and 247–323 (RTIY…PSKT).

In terms of assembly, interacts with MPC. In terms of tissue distribution, expressed in roots, leaves, stems, flowers and siliques. Detected in flowers only in growing organs: gynoecium, petals, stamenal filaments, anther walls and ovules.

It is found in the nucleus. In terms of biological role, binds nucleotic acids in vitro. The polypeptide is Polyadenylate-binding protein-interacting protein 12 (CID12) (Arabidopsis thaliana (Mouse-ear cress)).